Reading from the N-terminus, the 263-residue chain is SPRY domain-containing SOCS box protein 2 (263 aa).

The span at 1–16 (MGQTALAGGSSSTPTP) shows a compositional bias: polar residues. The segment at 1–48 (MGQTALAGGSSSTPTPQALYPDLSCPEGLEELLSAPPPDLGAQRRHGW) is disordered. The 196-residue stretch at 26 to 221 (PEGLEELLSA…VRIRYLGERR (196 aa)) folds into the B30.2/SPRY domain. Residues 222 to 263 (AEPHSLLHLSRLCVRHNLGDTRLGQVSALPLPPAMKRYLLYQ) form the SOCS box domain.

Belongs to the SPSB family. Component of the probable ECS(SPSB2) E3 ubiquitin-protein ligase complex which contains CUL5, RNF7/RBX2, Elongin BC complex and SPSB2. Interacts with CUL5, RNF7, ELOB and ELOC. Interacts with MET. Interacts (via B30.2/SPRY domain) with PAWR; this interaction occurs in association with the Elongin BC complex. Interacts with NOS2. As to quaternary structure, (Microbial infection) Interacts (via C-terminus) with HCV envelope glycoprotein E1. Interacts (via C-terminus) with HCV non-structural protein 5A; this interaction targets NS5A for ubiquitination and degradation.

The protein resides in the cytoplasm. It localises to the cytosol. The protein operates within protein modification; protein ubiquitination. In terms of biological role, substrate recognition component of a SCF-like ECS (Elongin BC-CUL2/5-SOCS-box protein) E3 ubiquitin-protein ligase complex which mediates the ubiquitination and subsequent proteasomal degradation of target proteins. Negatively regulates nitric oxide (NO) production and limits cellular toxicity in activated macrophages by mediating the ubiquitination and proteasomal degradation of NOS2. Acts as a bridge which links NOS2 with the ECS E3 ubiquitin ligase complex components ELOC and CUL5. This Homo sapiens (Human) protein is SPRY domain-containing SOCS box protein 2 (SPSB2).